Reading from the N-terminus, the 225-residue chain is Cytidylate kinase (225 aa).

Residue 11 to 19 coordinates ATP; sequence GPAAAGKST.

The protein belongs to the cytidylate kinase family. Type 1 subfamily.

Its subcellular location is the cytoplasm. It catalyses the reaction CMP + ATP = CDP + ADP. It carries out the reaction dCMP + ATP = dCDP + ADP. The protein is Cytidylate kinase of Bacillus cereus (strain AH187).